Reading from the N-terminus, the 186-residue chain is MITMDNIIRDGNPTLRARAKAIEFPLSEEDKKLAHDMMEFLENSQNPEIAKKYHLRAGVGLAAPQVDVSKRMTAVLVPGIEDDDEPIFKHVLINPTILSESVQLAALGEGEGCLSVDRDIPGYVPRHDRIKLRWYDLDGNKHVERLRDYPAIVVQHEIDHLNGILFYDHINKEQPLTVPEGTIILE.

The Fe cation site is built by cysteine 113 and histidine 156. Residue glutamate 157 is part of the active site. Histidine 160 is a binding site for Fe cation.

This sequence belongs to the polypeptide deformylase family. Fe(2+) is required as a cofactor.

The catalysed reaction is N-terminal N-formyl-L-methionyl-[peptide] + H2O = N-terminal L-methionyl-[peptide] + formate. In terms of biological role, removes the formyl group from the N-terminal Met of newly synthesized proteins. Requires at least a dipeptide for an efficient rate of reaction. N-terminal L-methionine is a prerequisite for activity but the enzyme has broad specificity at other positions. This is Peptide deformylase from Ligilactobacillus salivarius (strain UCC118) (Lactobacillus salivarius).